We begin with the raw amino-acid sequence, 806 residues long: Leucine--tRNA ligase (806 aa).

The 'HIGH' region motif lies at 40–51; sequence PYPSGSGLHVGH. Positions 576–580 match the 'KMSKS' region motif; it reads KMSKS. Lysine 579 lines the ATP pocket.

The protein belongs to the class-I aminoacyl-tRNA synthetase family.

It is found in the cytoplasm. The enzyme catalyses tRNA(Leu) + L-leucine + ATP = L-leucyl-tRNA(Leu) + AMP + diphosphate. This Chlorobium phaeobacteroides (strain BS1) protein is Leucine--tRNA ligase.